A 477-amino-acid chain; its full sequence is MKLSMPRFDQAPVLVVGDVMLDRYWHGGTSRISPEAPVPVVKVEQIEDRPGGAANVALNIAALGAPASLVGVTGDDEAADSLANSLQGAGVRALFQRIKHQPTIVKLRVMSRHQQLLRIDFEEPFATDALALAAEVDALLDGIKVLVLSDYGKGALRNHQVLIAAARARGIPVLADPKGKDFSIYRGASLITPNLSEFETIVGGCADEHELVSKGAQLMHDLELGALLVTRGEHGMTLLRPDHPAMHLPARAREVFDVTGAGDTVISTLAAAIAAGEELPHAVGLANLAAGIVVGKLGTAAISAPELRRAIQREEGSERGVLSLDQLLLAIDDARAHNEKIVFTNGCFDILHAGHVTYLEQARAQGDRLIVAINDDASVSRLKGPGRPINSVDRRMAVLAGLGAVDWVISFPEGTPENLLSQVRPDVLVKGGDYSIDQVVGADIVGAYGGTVKVLGLVENSSTTAIVEKIRKTDKAE.

Residues 1–318 (MKLSMPRFDQ…RAIQREEGSE (318 aa)) form a ribokinase region. 194–197 (NLSE) provides a ligand contact to ATP. Residue D263 is part of the active site. A cytidylyltransferase region spans residues 343 to 477 (FTNGCFDILH…EKIRKTDKAE (135 aa)).

This sequence in the N-terminal section; belongs to the carbohydrate kinase PfkB family. The protein in the C-terminal section; belongs to the cytidylyltransferase family. In terms of assembly, homodimer.

It carries out the reaction D-glycero-beta-D-manno-heptose 7-phosphate + ATP = D-glycero-beta-D-manno-heptose 1,7-bisphosphate + ADP + H(+). The catalysed reaction is D-glycero-beta-D-manno-heptose 1-phosphate + ATP + H(+) = ADP-D-glycero-beta-D-manno-heptose + diphosphate. It participates in nucleotide-sugar biosynthesis; ADP-L-glycero-beta-D-manno-heptose biosynthesis; ADP-L-glycero-beta-D-manno-heptose from D-glycero-beta-D-manno-heptose 7-phosphate: step 1/4. Its pathway is nucleotide-sugar biosynthesis; ADP-L-glycero-beta-D-manno-heptose biosynthesis; ADP-L-glycero-beta-D-manno-heptose from D-glycero-beta-D-manno-heptose 7-phosphate: step 3/4. Catalyzes the phosphorylation of D-glycero-D-manno-heptose 7-phosphate at the C-1 position to selectively form D-glycero-beta-D-manno-heptose-1,7-bisphosphate. Functionally, catalyzes the ADP transfer from ATP to D-glycero-beta-D-manno-heptose 1-phosphate, yielding ADP-D-glycero-beta-D-manno-heptose. In Pseudomonas fluorescens (strain ATCC BAA-477 / NRRL B-23932 / Pf-5), this protein is Bifunctional protein HldE.